Consider the following 608-residue polypeptide: Kinetochore protein NUF2 (608 aa).

Positions 121–125 are required for nuclear localization and function; the sequence is IGNLR. Coiled coils occupy residues 176–319 and 358–460; these read FESQ…QQKL and REKL…IEEE.

It belongs to the NUF2 family.

It localises to the chromosome. Its subcellular location is the centromere. The protein resides in the kinetochore. Its function is as follows. Required for anchoring centrosomal cores to the nuclear periphery. Plays a role in chromosome segregation but is dispensable for centromere clustering. The sequence is that of Kinetochore protein NUF2 from Toxoplasma gondii (strain ATCC 50611 / Me49).